The sequence spans 117 residues: Holo-[acyl-carrier-protein] synthase (117 aa).

Residues D8 and E57 each coordinate Mg(2+).

It belongs to the P-Pant transferase superfamily. AcpS family. The cofactor is Mg(2+).

Its subcellular location is the cytoplasm. The enzyme catalyses apo-[ACP] + CoA = holo-[ACP] + adenosine 3',5'-bisphosphate + H(+). In terms of biological role, transfers the 4'-phosphopantetheine moiety from coenzyme A to a Ser of acyl-carrier-protein. In Limosilactobacillus reuteri (Lactobacillus reuteri), this protein is Holo-[acyl-carrier-protein] synthase.